The chain runs to 800 residues: Ent-copalyl diphosphate synthase 2, chloroplastic (800 aa).

A chloroplast-targeting transit peptide spans 1–47; it reads MQMQVLTAASSLPRATLLRPAAAEPWRQSFLQLQARPIQRPGIMLHC. The interval 52–80 is disordered; that stretch reads QGQETRERRQLDDDEHARPPQGGDDDVAA. A compositionally biased stretch (basic and acidic residues) spans 55 to 69; it reads ETRERRQLDDDEHAR. Substrate is bound at residue Lys242. Positions 374 and 376 each coordinate Mg(2+). A DXDD motif motif is present at residues 374-377; the sequence is DIDD. Lys461 is a binding site for substrate.

This sequence belongs to the terpene synthase family. Mg(2+) is required as a cofactor.

It localises to the plastid. The protein resides in the chloroplast. It carries out the reaction (2E,6E,10E)-geranylgeranyl diphosphate = ent-copalyl diphosphate. Its pathway is secondary metabolite biosynthesis; terpenoid biosynthesis. Catalyzes the conversion of geranylgeranyl diphosphate to the phytoalexin precursor ent-copalyl diphosphate. The protein is Ent-copalyl diphosphate synthase 2, chloroplastic of Oryza sativa subsp. japonica (Rice).